The following is a 493-amino-acid chain: Lysine--tRNA ligase (493 aa).

The Mg(2+) site is built by Glu402 and Glu409.

It belongs to the class-II aminoacyl-tRNA synthetase family. In terms of assembly, homodimer. Mg(2+) is required as a cofactor.

The protein localises to the cytoplasm. The catalysed reaction is tRNA(Lys) + L-lysine + ATP = L-lysyl-tRNA(Lys) + AMP + diphosphate. This Fusobacterium nucleatum subsp. nucleatum (strain ATCC 25586 / DSM 15643 / BCRC 10681 / CIP 101130 / JCM 8532 / KCTC 2640 / LMG 13131 / VPI 4355) protein is Lysine--tRNA ligase.